Consider the following 251-residue polypeptide: Adenosylcobinamide-GDP ribazoletransferase (251 aa).

6 consecutive transmembrane segments (helical) span residues 36–56 (LYPFIGLIIGILWYLSFFVLS), 60–80 (VPIMLMAALILTVPYILTGFL), 110–130 (VGAFSVISVVLLLLVEFAGIF), 181–201 (EIILLGIYVLVALITFFTLGI), 202–222 (NYLIAILAMGLISFILLLKVK), and 231–251 (DVAGYILVLMEFTGILLLGII).

This sequence belongs to the CobS family. Mg(2+) is required as a cofactor.

The protein localises to the cell membrane. It carries out the reaction alpha-ribazole + adenosylcob(III)inamide-GDP = adenosylcob(III)alamin + GMP + H(+). The catalysed reaction is alpha-ribazole 5'-phosphate + adenosylcob(III)inamide-GDP = adenosylcob(III)alamin 5'-phosphate + GMP + H(+). It functions in the pathway cofactor biosynthesis; adenosylcobalamin biosynthesis; adenosylcobalamin from cob(II)yrinate a,c-diamide: step 7/7. Its function is as follows. Joins adenosylcobinamide-GDP and alpha-ribazole to generate adenosylcobalamin (Ado-cobalamin). Also synthesizes adenosylcobalamin 5'-phosphate from adenosylcobinamide-GDP and alpha-ribazole 5'-phosphate. This is Adenosylcobinamide-GDP ribazoletransferase from Clostridium perfringens (strain SM101 / Type A).